The following is a 362-amino-acid chain: Serine/threonine-protein kinase SBK2 (362 aa).

Residues 1–11 are compositionally biased toward basic and acidic residues; that stretch reads MPGKQSEDRPM. The interval 1 to 20 is disordered; it reads MPGKQSEDRPMEVAAVEDGG. Positions 62 to 330 constitute a Protein kinase domain; it reads YEEVRPLGQG…IKSYLGQPWK (269 aa). Residues 68 to 76 and K91 each bind ATP; that span reads LGQGRFGRV. The active-site Proton acceptor is the D183. Residues 317 to 362 form a disordered region; the sequence is PVSSIKSYLGQPWKQREEGAEELTKELREDGSRGGQEAAKGEQPAC. Positions 330-348 are enriched in basic and acidic residues; it reads KQREEGAEELTKELREDGS.

The protein belongs to the protein kinase superfamily. Ser/Thr protein kinase family. STKL subfamily.

The enzyme catalyses L-seryl-[protein] + ATP = O-phospho-L-seryl-[protein] + ADP + H(+). It catalyses the reaction L-threonyl-[protein] + ATP = O-phospho-L-threonyl-[protein] + ADP + H(+). In Rattus norvegicus (Rat), this protein is Serine/threonine-protein kinase SBK2 (Sbk2).